The following is a 953-amino-acid chain: 26S proteasome non-ATPase regulatory subunit 1 (953 aa).

Methionine 1 is modified (N-acetylmethionine). A Phosphothreonine modification is found at threonine 273. The segment at 279-318 is disordered; that stretch reads PGSTNTGTVPGSEKDSDSMETEEKTSSAFVGKTPEASPEP. Serine 290 is subject to Phosphoserine. The segment covering 290–303 has biased composition (basic and acidic residues); the sequence is SEKDSDSMETEEKT. Lysine 310 bears the N6-acetyllysine mark. Position 311 is a phosphothreonine (threonine 311). Position 315 is a phosphoserine (serine 315). PC repeat units lie at residues 403-436, 441-474, 476-510, 511-545, 547-580, 581-616, 617-649, 651-685, 686-726, and 729-761; these read TATA…PGSA, GGLY…DIVR, GGSL…VTGE, AAGL…EKIL, GLAV…ILRR, SGMY…DVRR, AAVE…PHVR, GAAM…YVRQ, GALI…DVMA, and GAIL…PSVV. Lysine 720 carries the post-translational modification N6-acetyllysine. The residue at position 830 (threonine 830) is a Phosphothreonine. At serine 834 the chain carries Phosphoserine. Disordered stretches follow at residues 839–881 and 930–953; these read AKKK…LDNP and AHGP…YIDD. Composition is skewed to basic and acidic residues over residues 842–852 and 859–872; these read KEKEKEKKEEE and AEKK…KEPE. The segment covering 936 to 953 has biased composition (acidic residues); it reads EEEEQEPEPPEPFEYIDD.

This sequence belongs to the proteasome subunit S1 family. As to quaternary structure, component of the 19S proteasome regulatory particle complex. The 26S proteasome consists of a 20S core particle (CP) and two 19S regulatory subunits (RP). The regulatory particle is made of a lid composed of 9 subunits, a base containing 6 ATPases and few additional components including PSMD1. Interacts with ADRM1. Interacts with ZFAND1.

Component of the 26S proteasome, a multiprotein complex involved in the ATP-dependent degradation of ubiquitinated proteins. This complex plays a key role in the maintenance of protein homeostasis by removing misfolded or damaged proteins, which could impair cellular functions, and by removing proteins whose functions are no longer required. Therefore, the proteasome participates in numerous cellular processes, including cell cycle progression, apoptosis, or DNA damage repair. The polypeptide is 26S proteasome non-ATPase regulatory subunit 1 (PSMD1) (Homo sapiens (Human)).